A 278-amino-acid chain; its full sequence is Shikimate dehydrogenase (NADP(+)) (278 aa).

Shikimate-binding positions include 15-17 and T62; that span reads SMS. K66 serves as the catalytic Proton acceptor. NADP(+) is bound at residue E78. Shikimate-binding residues include N87 and D102. NADP(+) is bound by residues 127 to 131, 151 to 156, and I217; these read GAGGA and NRTPEK. Y219 serves as a coordination point for shikimate. An NADP(+)-binding site is contributed by G240.

Belongs to the shikimate dehydrogenase family. In terms of assembly, homodimer.

The enzyme catalyses shikimate + NADP(+) = 3-dehydroshikimate + NADPH + H(+). The protein operates within metabolic intermediate biosynthesis; chorismate biosynthesis; chorismate from D-erythrose 4-phosphate and phosphoenolpyruvate: step 4/7. Its function is as follows. Involved in the biosynthesis of the chorismate, which leads to the biosynthesis of aromatic amino acids. Catalyzes the reversible NADPH linked reduction of 3-dehydroshikimate (DHSA) to yield shikimate (SA). In Bacillus licheniformis (strain ATCC 14580 / DSM 13 / JCM 2505 / CCUG 7422 / NBRC 12200 / NCIMB 9375 / NCTC 10341 / NRRL NRS-1264 / Gibson 46), this protein is Shikimate dehydrogenase (NADP(+)).